A 1352-amino-acid polypeptide reads, in one-letter code: MIRSVLVLMCSLTFIGNLTRGQSVDMGHNGTGSCLDSQVQPDYFESVHTTWPMPIDTSKAEGVIYPNGKSYSNITLTYTGLYPKANDLGKQYLFSDGHSAPGRLNNLFVSNYSSQVESFDDGFVVRIGAAANKTGTTVISQSTFKPIKKIYPAFLLGHSVGNYTPSNRTGRYLNHTLVILPDGCGTILHAFYCVLHPRTQQNCAGETNFKSLSLWDTPASDCVSGSYNQEATLGAFKVYFDLINCTFRYNYTITEDENAEWFGITQDTQGVHLYSSRKENVFRNNMFHFATLPVYQKILYYTVIPRSIRSPFNDRKAWAAFYIYKLHPLTYLLNFDVEGYITKAVDCGYDDLAQLQCSYESFEVETGVYSVSSFEASPRGEFIEQATTQECDFTPMLTGTPPPIYNFKRLVFTNCNYNLTKLLSLFQVSEFSCHQVSPSSLATGCYSSLTVDYFAYSTDMSSYLQPGSAGAIVQFNYKQDFSNPTCRVLATVPQNLTTITKPSNYAYLTECYKTSAYGKNYLYNAPGAYTPCLSLASRGFSTKYQSHSDGELTTTGYIYPVTGNLQMAFIISVQYGTDTNSVCPMQALRNDTSIEDKLDVCVEYSLHGITGRGVFHNCTSVGLRNQRFVYDTFDNLVGYHSDNGNYYCVRPCVSVPVSVIYDKASNSHATLFGSVACSHVTTMMSQFSRMTKTNLLARTTPGPLQTTVGCAMGFINSSMVVDECQLPLGQSLCAIPPTTSSRVRRATSGASDVFQIATLNFTSPLTLAPINSTGFVVAVPTNFTFGVTQEFIETTIQKITVDCKQYVCNGFKKCEDLLKEYGQFCSKINQALHGANLRQDESIANLFSSIKTQNTQPLQAGLNGDFNLTMLQIPQVTTGERKYRSTIEDLLFNKVTIADPGYMQGYDECMQQGPQSARDLICAQYVAGYKVLPPLYDPYMEAAYTSSLLGSIAGASWTAGLSSFAAIPFAQSIFYRLNGVGITQQVLSENQKIIANKFNQALGAMQTGFTTTNLAFNKVQDAVNANAMALSKLAAELSNTFGAISSSISDILARLDTVEQEAQIDRLINGRLTSLNAFVAQQLVRTEAAARSAQLAQDKVNECVKSQSKRNGFCGTGTHIVSFAINAPNGLYFFHVGYQPTSHVNATAAYGLCNTENPQKCIAPIDGYFVLNQTTSTVADSDQQWYYTGSSFFHPEPITEANSKYVSMDVKFENLTNRLPPPLLSNSTDLDFKEELEEFFKNVSSQGPNFQEISKINTTLLNLNTELMVLSEVVKQLNESYIDLKELGNYTFYQKWPWYIWLGFIAGLVALALCVFFILCCTGCGTSCLGKLKCNRCCDSYDEYEVEKIHVH.

The signal sequence occupies residues 1–12; it reads MIRSVLVLMCSL. At 13–1297 the chain is on the extracellular side; sequence TFIGNLTRGQ…GNYTFYQKWP (1285 aa). The BetaCoV S1-NTD domain occupies 22–359; sequence QSVDMGHNGT…DDLAQLQCSY (338 aa). N-linked (GlcNAc...) asparagine; by host glycans are attached at residues Asn29, Asn73, Asn111, Asn132, Asn167, Asn174, Asn244, and Asn250. Residues Cys193 and Cys245 are joined by a disulfide bond. Disulfide bonds link Cys347/Cys357 and Cys391/Cys415. A BetaCoV S1-CTD domain is found at 389 to 585; sequence QECDFTPMLT…GTDTNSVCPM (197 aa). Asn418 carries N-linked (GlcNAc...) asparagine; by host glycosylation. 2 disulfide bridges follow: Cys433–Cys486 and Cys445–Cys583. Residues Asn495, Asn590, Asn617, Asn716, Asn760, Asn771, Asn782, and Asn867 are each glycosylated (N-linked (GlcNAc...) asparagine; by host). Fusion peptide stretches follow at residues 885-906 and 904-926; these read STIEDLLFNKVTIADPGYMQGY and QGYDECMQQGPQSARDLICAQYV. A disulfide bridge connects residues Cys909 and Cys922. Residues 991-1041 form a heptad repeat 1 region; that stretch reads QKIIANKFNQALGAMQTGFTTTNLAFNKVQDAVNANAMALSKLAAELSNTF. A coiled-coil region spans residues 1020–1064; it reads QDAVNANAMALSKLAAELSNTFGAISSSISDILARLDTVEQEAQI. Asn1145, Asn1172, Asn1214, Asn1226, Asn1242, Asn1257, Asn1278, and Asn1289 each carry an N-linked (GlcNAc...) asparagine; by host glycan. Residues 1247-1286 are heptad repeat 2; that stretch reads GPNFQEISKINTTLLNLNTELMVLSEVVKQLNESYIDLKE. The stretch at 1259–1287 forms a coiled coil; sequence TLLNLNTELMVLSEVVKQLNESYIDLKEL. Residues 1298–1318 form a helical membrane-spanning segment; it reads WYIWLGFIAGLVALALCVFFI. At 1319–1352 the chain is on the cytoplasmic side; the sequence is LCCTGCGTSCLGKLKCNRCCDSYDEYEVEKIHVH. Positions 1350–1352 match the KxHxx motif; it reads HVH.

It belongs to the betacoronaviruses spike protein family. In terms of assembly, homotrimer; each monomer consists of a S1 and a S2 subunit. The resulting peplomers protrude from the virus surface as spikes. Post-translationally, specific enzymatic cleavages in vivo yield mature proteins. The precursor is processed into S1 and S2 by host cell furin or another cellular protease to yield the mature S1 and S2 proteins. Additionally, a second cleavage leads to the release of a fusion peptide after viral attachment to host cell receptor. The cytoplasmic Cys-rich domain is palmitoylated. Spike glycoprotein is digested within host endosomes.

It localises to the virion membrane. Its subcellular location is the host endoplasmic reticulum-Golgi intermediate compartment membrane. It is found in the host cell membrane. Attaches the virion to the cell membrane by interacting with host receptor, initiating the infection. Functionally, mediates fusion of the virion and cellular membranes by acting as a class I viral fusion protein. Under the current model, the protein has at least three conformational states: pre-fusion native state, pre-hairpin intermediate state, and post-fusion hairpin state. During viral and target cell membrane fusion, the coiled coil regions (heptad repeats) assume a trimer-of-hairpins structure, positioning the fusion peptide in close proximity to the C-terminal region of the ectodomain. The formation of this structure appears to drive apposition and subsequent fusion of viral and target cell membranes. Its function is as follows. Acts as a viral fusion peptide which is unmasked following S2 cleavage occurring upon virus endocytosis. This is Spike glycoprotein from Bat coronavirus HKU5 (BtCoV).